Here is a 218-residue protein sequence, read N- to C-terminus: MATSDHLARMRVEYGSAEKDGSVDLDADWLDIGWVALLNQWMTEAHDAGVAEPNAMVVATIDGEGRPVTRTVLCKSVDESGISFYTNYDSDKGAQLAARPYASATFPWYLLGRQVHVRGRVTKVSAEETADYWSKRPRGSQLGAWASQQSRPIASRAALMQQLADVTARFADVDEVPVPPHWGGYLIAAEVVEFWQGRENRVHNRIRVRDGAVERLQP.

Substrate contacts are provided by residues 11–14 (RVEY) and Lys-75. FMN-binding positions include 70–75 (RTVLCK), 85–86 (YT), Lys-92, and Gln-114. Substrate-binding residues include Tyr-132, Arg-136, and Ser-140. Residues 149-150 (QS) and Trp-195 contribute to the FMN site. Residue 201–203 (RVH) coordinates substrate. Arg-205 is an FMN binding site.

This sequence belongs to the pyridoxamine 5'-phosphate oxidase family. Homodimer. FMN serves as cofactor.

The enzyme catalyses pyridoxamine 5'-phosphate + O2 + H2O = pyridoxal 5'-phosphate + H2O2 + NH4(+). The catalysed reaction is pyridoxine 5'-phosphate + O2 = pyridoxal 5'-phosphate + H2O2. It participates in cofactor metabolism; pyridoxal 5'-phosphate salvage; pyridoxal 5'-phosphate from pyridoxamine 5'-phosphate: step 1/1. Its pathway is cofactor metabolism; pyridoxal 5'-phosphate salvage; pyridoxal 5'-phosphate from pyridoxine 5'-phosphate: step 1/1. Functionally, catalyzes the oxidation of either pyridoxine 5'-phosphate (PNP) or pyridoxamine 5'-phosphate (PMP) into pyridoxal 5'-phosphate (PLP). This Mycolicibacterium gilvum (strain PYR-GCK) (Mycobacterium gilvum (strain PYR-GCK)) protein is Pyridoxine/pyridoxamine 5'-phosphate oxidase.